A 943-amino-acid polypeptide reads, in one-letter code: Isoleucine--tRNA ligase 1 (943 aa).

The short motif at 58–68 is the 'HIGH' region element; sequence PYANGTIHIGH. Glu567 lines the L-isoleucyl-5'-AMP pocket. Residues 608 to 612 carry the 'KMSKS' region motif; it reads KMSKS. Position 611 (Lys611) interacts with ATP. Zn(2+)-binding residues include Cys906, Cys909, Cys926, and Cys929.

The protein belongs to the class-I aminoacyl-tRNA synthetase family. IleS type 1 subfamily. As to quaternary structure, monomer. Zn(2+) serves as cofactor.

The protein resides in the cytoplasm. It catalyses the reaction tRNA(Ile) + L-isoleucine + ATP = L-isoleucyl-tRNA(Ile) + AMP + diphosphate. In terms of biological role, catalyzes the attachment of isoleucine to tRNA(Ile). As IleRS can inadvertently accommodate and process structurally similar amino acids such as valine, to avoid such errors it has two additional distinct tRNA(Ile)-dependent editing activities. One activity is designated as 'pretransfer' editing and involves the hydrolysis of activated Val-AMP. The other activity is designated 'posttransfer' editing and involves deacylation of mischarged Val-tRNA(Ile). Confers resistance to the antibiotic mupirocin (pseudomonic acid A), an Ile-analog produced by P.fluorescens NCIMB 10586 itself that competitively inhibits activation by Ile-tRNA synthetase, thus inhibiting protein biosynthesis. The polypeptide is Isoleucine--tRNA ligase 1 (ileS1) (Pseudomonas fluorescens).